A 606-amino-acid chain; its full sequence is Atypical protein kinase C (606 aa).

Residues serine 30 to asparagine 113 form the PB1 domain. The segment at glycine 145–cysteine 195 adopts a Phorbol-ester/DAG-type zinc-finger fold. In terms of domain architecture, Protein kinase spans phenylalanine 264–phenylalanine 532. ATP is bound by residues isoleucine 270–valine 278 and lysine 293. The active-site Proton acceptor is aspartate 388. Positions lysine 533–aspartate 604 constitute an AGC-kinase C-terminal domain.

It belongs to the protein kinase superfamily. AGC Ser/Thr protein kinase family. PKC subfamily. In terms of assembly, interacts with baz; the interaction is required for apical localization of aPKC in neuroblasts and epithelial cells. Interacts with Dap160; the interaction promotes aPKC apical localization and kinase activity. Interacts with and phosphorylates l(2)gl and yrt. Interacts with crb and ref(2)P. Forms a complex with baz, fz and Patj. Expressed in the testis. In spermatid cysts, localizes near the tips of spermatid flagellar axonemes (at protein level). Detectable in freshly laid eggs before onset of zygotic transcription so is deposited in the egg during oogenesis. At the cellular blastoderm stage, present in all cells except the pole cells. During gastrulation, strongly expressed in tissues undergoing morphogenetic movements such as invaginating mesoderm, proctodeum and cephalic furrow. Strongly expressed in neuroblasts.

It is found in the cytoplasm. Its subcellular location is the cell cortex. The protein localises to the apicolateral cell membrane. It catalyses the reaction L-seryl-[protein] + ATP = O-phospho-L-seryl-[protein] + ADP + H(+). It carries out the reaction L-threonyl-[protein] + ATP = O-phospho-L-threonyl-[protein] + ADP + H(+). Functionally, serine/threonine protein kinase which is required for apico-basal cell polarity in the germ line as well as in epithelial and neural precursor cells, for epithelial planar cell polarity and for cell proliferation. During oocyte development, required for the posterior translocation of oocyte specification factors and for the posterior establishment of the microtubule organizing center within the presumptive oocyte. Phosphorylates l(2)gl which restricts l(2)gl activity to the oocyte posterior and regulates posterior enrichment of par-1, leading to establishment of correct oocyte polarity. Essential for apical localization of l(2)gl and par-6 in neuroblasts and for exclusion of mira from the apical cortex. Phosphorylates baz which is required for targeting of baz to the postsynaptic region where it is involved in actin organization, and for apical exclusion of baz which is necessary for establishment of the apical/lateral border in epithelial cells. Phosphorylates yrt which prevents its premature apical localization and is necessary for correct epithelial cell polarization. Required for the establishment of mitotic spindle orientation during symmetric division of epithelial cells and for apical exclusion of raps/Pins. Involved in symmetric adherens junction positioning during embryogenesis. Required for polarization of the spermatid cyst which is necessary for sperm differentiation. Required for stimulation of the Toll signaling pathway which activates Dif and dl and plays a role in innate immunity. Plays a role in memory enhancement. This Drosophila melanogaster (Fruit fly) protein is Atypical protein kinase C.